The sequence spans 210 residues: Thymidylate kinase (210 aa).

10 to 17 (GPEGAGKS) provides a ligand contact to ATP.

Belongs to the thymidylate kinase family.

The catalysed reaction is dTMP + ATP = dTDP + ADP. Its function is as follows. Phosphorylation of dTMP to form dTDP in both de novo and salvage pathways of dTTP synthesis. This is Thymidylate kinase from Pseudomonas putida (strain ATCC 700007 / DSM 6899 / JCM 31910 / BCRC 17059 / LMG 24140 / F1).